The sequence spans 931 residues: MAARWAAHGPGPGLDEFTVPAEKRRFLEGSRGRIQGLFEVRLAVLEAQGDWRPALPPPGQPPPAARIWVQLAGGGKAVRSAKEYIKGLCEPELEEKEYYPKDMHCIFVGAQNMFLNSLIQDTCADITVLEIGLLSIKGGAEAVVMAQSQVQQFVKLFENNESLSSECESDIKKQFRQFVEAHADKYTMDLLILPSSLKRELLTLMQTECCESRGAIIDLTGSKSPAELLQDKTSKVILTSRDGKMGDEEERNNAGTPVTELTKQMDNVFSDAPETSFVPINVVPPLEAMTSKERQSCKRRFSDAEESLPKKQLSLENDQEVKSVSHNDSSKRDAVIDLISDSSGELDDPSYCIKEGDDISEEIEYKILVNFFRTMGYSQSIVEKVIGVLGQSVEPLTLLEEIEKENLRFQKEQEWSSKTPKTTNLRLGSNANSSHKLEDEDISCKKNPLKTTHTSNETRTERHKARDMPSTQVDAEDKMHVSVCKPVSPDKSSAICYKKTDIYCPGKNHNSTSSDAETDGFVPLSPPQAGAPKDVDFVARGSSDVRCTSAKSKTAVHQKSAGPSPVQNSHSVVEDQLGHCSSYQVRSPNQHTSQMSNFENPTQAHVLSSEIHSANPDREVSGSHRRHIDPSITGVQRFLESLKKPYRLELKNEPGKPYLKHIIIDGSNVAISHGLRKFFSCRGIAIAVDYFWKRGHRNITVFVPQWRTRRDPSITEQDFLTQLEDVGILSLTPSRMVLGARIASHDDRFLLHLADKTGGVIVTNDNFREFVTESLAWREIIQKRLLQYTFAGDIFMVPDDPLGRNGPRLDDFLQSEGCSRDFLSAQKALQSREQYSSETPLFMHVPNPASSSQQPKNRAHGDHSAAWLPLDTNMKACLSIPPQRSASETVWLREALIKIFPDYEQRQKIDKILADHPFMRDLNALSAMVLD.

One can recognise a KH-like domain in the interval 75-159 (GKAVRSAKEY…VQQFVKLFEN (85 aa)). 3 disordered regions span residues 289 to 329 (MTSK…HNDS), 413 to 474 (QEWS…TQVD), and 547 to 571 (CTSA…NSHS). 2 stretches are compositionally biased toward basic and acidic residues: residues 290–309 (TSKE…ESLP) and 319–329 (QEVKSVSHNDS). The span at 416-434 (SSKTPKTTNLRLGSNANSS) shows a compositional bias: polar residues. Composition is skewed to basic and acidic residues over residues 435-444 (HKLEDEDISC) and 456-467 (NETRTERHKARD). A compositionally biased stretch (polar residues) spans 547-557 (CTSAKSKTAVH). The 153-residue stretch at 659-811 (LKHIIIDGSN…LGRNGPRLDD (153 aa)) folds into the RNase NYN domain. Positions 841–863 (LFMHVPNPASSSQQPKNRAHGDH) are disordered. The coCUN stretch occupies residues 884–931 (RSASETVWLREALIKIFPDYEQRQKIDKILADHPFMRDLNALSAMVLD).

This sequence belongs to the N4BP1 family.

The protein resides in the cytoplasm. It is found in the cytosol. Its subcellular location is the nucleus. The protein localises to the nucleolus. It localises to the PML body. Functionally, potent suppressor of cytokine production that acts as a regulator of innate immune signaling and inflammation. Acts as a key negative regulator of select cytokine and chemokine responses elicited by TRIF-independent Toll-like receptors (TLRs), thereby limiting inflammatory cytokine responses to minor insults. Has ribonuclease activity. The chain is NEDD4-binding protein 1 from Gallus gallus (Chicken).